A 411-amino-acid polypeptide reads, in one-letter code: Phosphoribosylaminoimidazole-succinocarboxamide synthase, chloroplastic (411 aa).

Residues 1 to 53 (MAQCVRSTLNPVRTPQSFTRKAYVKSPAFASVSFLRAVPEFNKYPKPCSLVMS) constitute a chloroplast transit peptide.

It belongs to the SAICAR synthetase family.

It is found in the plastid. It localises to the chloroplast. The catalysed reaction is 5-amino-1-(5-phospho-D-ribosyl)imidazole-4-carboxylate + L-aspartate + ATP = (2S)-2-[5-amino-1-(5-phospho-beta-D-ribosyl)imidazole-4-carboxamido]succinate + ADP + phosphate + 2 H(+). It functions in the pathway purine metabolism; IMP biosynthesis via de novo pathway; 5-amino-1-(5-phospho-D-ribosyl)imidazole-4-carboxamide from 5-amino-1-(5-phospho-D-ribosyl)imidazole-4-carboxylate: step 1/2. This is Phosphoribosylaminoimidazole-succinocarboxamide synthase, chloroplastic (PUR7) from Arabidopsis thaliana (Mouse-ear cress).